The following is a 638-amino-acid chain: Threonine--tRNA ligase (638 aa).

A TGS domain is found at 1 to 61; it reads MPKITLPDGT…KNDSKVVIIT (61 aa). A catalytic region spans residues 242 to 533; sequence DHRKLGKKHS…LIEQYEAKFP (292 aa). Cys-333, His-384, and His-510 together coordinate Zn(2+).

The protein belongs to the class-II aminoacyl-tRNA synthetase family. In terms of assembly, homodimer. The cofactor is Zn(2+).

Its subcellular location is the cytoplasm. It carries out the reaction tRNA(Thr) + L-threonine + ATP = L-threonyl-tRNA(Thr) + AMP + diphosphate + H(+). In terms of biological role, catalyzes the attachment of threonine to tRNA(Thr) in a two-step reaction: L-threonine is first activated by ATP to form Thr-AMP and then transferred to the acceptor end of tRNA(Thr). Also edits incorrectly charged L-seryl-tRNA(Thr). The protein is Threonine--tRNA ligase of Prochlorococcus marinus (strain MIT 9515).